The following is a 223-amino-acid chain: MPKKFQGENTKSAAARARRAEAKAAADAKKQKELEDAYWKDDDKHVMRKEQRKEEKEKRRLDQLERKKETQRLLEEEDSKLKGGKAPRVATSSKVTRAQIEDTLRRDHQLREAPDTAEKAKSHLEVPLEENVNRRVLEEGSVEARTIEDAIAVLSVAEEAADRHPERRMRAAFTAFEEAQLPRLKQENPNMRLSQLKQLLKKEWLRSPDNPMNQRAVPFNAPK.

The segment at 1 to 126 (MPKKFQGENT…AEKAKSHLEV (126 aa)) is disordered. Residues 15–82 (ARARRAEAKA…LLEEEDSKLK (68 aa)) are a coiled coil. Basic and acidic residues-rich tracts occupy residues 18–74 (RRAE…QRLL) and 99–126 (QIED…HLEV). Phosphoserine occurs at positions 141 and 194. Positions 204 to 223 (WLRSPDNPMNQRAVPFNAPK) are disordered.

The protein belongs to the CCDC124 family. Associates with translationally inactive ribosomes in the nonrotated state. Interacts with RASGEF1B. In terms of tissue distribution, ubiquitously expressed.

Its subcellular location is the cytoplasm. It is found in the cytoskeleton. The protein localises to the microtubule organizing center. The protein resides in the centrosome. It localises to the midbody. In terms of biological role, ribosome-binding protein involved in ribosome hibernation: associates with translationally inactive ribosomes and stabilizes the nonrotated conformation of the 80S ribosome, thereby promoting ribosome preservation and storage. Also required for proper progression of late cytokinetic stages. This chain is Coiled-coil domain-containing protein 124, found in Homo sapiens (Human).